Reading from the N-terminus, the 720-residue chain is 1,4-alpha-glucan branching enzyme GlgB (720 aa).

Asp400 functions as the Nucleophile in the catalytic mechanism. Glu453 (proton donor) is an active-site residue.

The protein belongs to the glycosyl hydrolase 13 family. GlgB subfamily. In terms of assembly, monomer.

The catalysed reaction is Transfers a segment of a (1-&gt;4)-alpha-D-glucan chain to a primary hydroxy group in a similar glucan chain.. It functions in the pathway glycan biosynthesis; glycogen biosynthesis. Functionally, catalyzes the formation of the alpha-1,6-glucosidic linkages in glycogen by scission of a 1,4-alpha-linked oligosaccharide from growing alpha-1,4-glucan chains and the subsequent attachment of the oligosaccharide to the alpha-1,6 position. This chain is 1,4-alpha-glucan branching enzyme GlgB, found in Chlamydia pneumoniae (Chlamydophila pneumoniae).